A 490-amino-acid polypeptide reads, in one-letter code: UDP-N-acetylmuramyl-tripeptide synthetase (490 aa).

Residue 113-119 (GTDGKTT) coordinates ATP. UDP-N-acetyl-alpha-D-muramoyl-L-alanyl-D-glutamate-binding positions include 158–159 (TT), Ser-185, and Arg-193. Lys-225 is modified (N6-carboxylysine).

Belongs to the MurCDEF family. MurE subfamily. In terms of processing, carboxylation is probably crucial for Mg(2+) binding and, consequently, for the gamma-phosphate positioning of ATP.

It localises to the cytoplasm. It functions in the pathway cell wall biogenesis; peptidoglycan biosynthesis. In terms of biological role, catalyzes the addition of an amino acid to the nucleotide precursor UDP-N-acetylmuramoyl-L-alanyl-D-glutamate (UMAG) in the biosynthesis of bacterial cell-wall peptidoglycan. The polypeptide is UDP-N-acetylmuramyl-tripeptide synthetase (Deinococcus radiodurans (strain ATCC 13939 / DSM 20539 / JCM 16871 / CCUG 27074 / LMG 4051 / NBRC 15346 / NCIMB 9279 / VKM B-1422 / R1)).